The sequence spans 471 residues: UDP-N-acetylmuramate--L-alanine ligase (471 aa).

114–120 (GTHGKTT) contacts ATP.

The protein belongs to the MurCDEF family.

It is found in the cytoplasm. The catalysed reaction is UDP-N-acetyl-alpha-D-muramate + L-alanine + ATP = UDP-N-acetyl-alpha-D-muramoyl-L-alanine + ADP + phosphate + H(+). It participates in cell wall biogenesis; peptidoglycan biosynthesis. Cell wall formation. This Methylobacterium sp. (strain 4-46) protein is UDP-N-acetylmuramate--L-alanine ligase.